The chain runs to 378 residues: Carbamoyl phosphate synthase small chain (378 aa).

The interval 1-188 is CPSase; it reads MLPSFPPAIL…LGRGYGVQDK (188 aa). 3 residues coordinate L-glutamine: Ser50, Gly240, and Gly242. The Glutamine amidotransferase type-1 domain maps to 192 to 378; sequence HVVAYDFGVK…FTAAMAERKQ (187 aa). Cys268 functions as the Nucleophile in the catalytic mechanism. L-glutamine is bound by residues Leu269, Gln272, Asn310, Gly312, and Phe313. Residues His352 and Glu354 contribute to the active site.

It belongs to the CarA family. In terms of assembly, composed of two chains; the small (or glutamine) chain promotes the hydrolysis of glutamine to ammonia, which is used by the large (or ammonia) chain to synthesize carbamoyl phosphate. Tetramer of heterodimers (alpha,beta)4.

It catalyses the reaction hydrogencarbonate + L-glutamine + 2 ATP + H2O = carbamoyl phosphate + L-glutamate + 2 ADP + phosphate + 2 H(+). The enzyme catalyses L-glutamine + H2O = L-glutamate + NH4(+). It participates in amino-acid biosynthesis; L-arginine biosynthesis; carbamoyl phosphate from bicarbonate: step 1/1. It functions in the pathway pyrimidine metabolism; UMP biosynthesis via de novo pathway; (S)-dihydroorotate from bicarbonate: step 1/3. Functionally, small subunit of the glutamine-dependent carbamoyl phosphate synthetase (CPSase). CPSase catalyzes the formation of carbamoyl phosphate from the ammonia moiety of glutamine, carbonate, and phosphate donated by ATP, constituting the first step of 2 biosynthetic pathways, one leading to arginine and/or urea and the other to pyrimidine nucleotides. The small subunit (glutamine amidotransferase) binds and cleaves glutamine to supply the large subunit with the substrate ammonia. This Ralstonia nicotianae (strain ATCC BAA-1114 / GMI1000) (Ralstonia solanacearum) protein is Carbamoyl phosphate synthase small chain.